The following is a 273-amino-acid chain: Large ribosomal subunit protein uL2c (273 aa).

The protein belongs to the universal ribosomal protein uL2 family. Part of the 50S ribosomal subunit.

It localises to the plastid. The protein localises to the apicoplast. The protein is Large ribosomal subunit protein uL2c (rpl2) of Eimeria tenella (Coccidian parasite).